We begin with the raw amino-acid sequence, 701 residues long: Protein UL29/UL28 (701 aa).

The tract at residues methionine 1 to arginine 33 is disordered.

This sequence belongs to the herpesviridae US22 family. In terms of assembly, interacts with UL38 and host HDAC1; these interactions are necessary for the HDAC1 interaction with UL38. Interacts with host MTA2.

Its subcellular location is the virion. It localises to the host nucleus. The protein localises to the host cytoplasm. Functionally, contributes to activation of immediate-early gene expression. The chain is Protein UL29/UL28 (UL29) from Homo sapiens (Human).